A 205-amino-acid polypeptide reads, in one-letter code: Thymidylate kinase (205 aa).

Residue 11–18 (GVEGSGKS) participates in ATP binding.

This sequence belongs to the thymidylate kinase family.

It catalyses the reaction dTMP + ATP = dTDP + ADP. Its function is as follows. Phosphorylation of dTMP to form dTDP in both de novo and salvage pathways of dTTP synthesis. In Ruthia magnifica subsp. Calyptogena magnifica, this protein is Thymidylate kinase.